A 79-amino-acid polypeptide reads, in one-letter code: uncharacterized protein (79 aa).

This is an uncharacterized protein from Haemophilus influenzae (strain ATCC 51907 / DSM 11121 / KW20 / Rd).